Here is a 376-residue protein sequence, read N- to C-terminus: Thiol-disulfide oxidoreductase LTO1 (376 aa).

The transit peptide at methionine 1–lysine 45 directs the protein to the chloroplast. The tract at residues isoleucine 44–serine 77 is disordered. Residues cysteine 46–asparagine 81 are Stromal-facing. Positions serine 57–serine 77 are enriched in low complexity. The chain crosses the membrane as a helical span at residues tryptophan 82–valine 102. Over threonine 103–alanine 125 the chain is Lumenal. Cysteine 109 and cysteine 116 are disulfide-bonded. Residues valine 126–leucine 146 traverse the membrane as a helical segment. At serine 147 to arginine 165 the chain is on the stromal side. The chain crosses the membrane as a helical span at residues phenylalanine 166–leucine 186. At serine 187–glycine 192 the chain is on the lumenal side. The chain crosses the membrane as a helical span at residues serine 193 to valine 213. Cysteine 195 and cysteine 198 are disulfide-bonded. Residues lysine 214 to glutamine 223 are Stromal-facing. Residues valine 224 to serine 244 form a helical membrane-spanning segment. The Lumenal segment spans residues threonine 245–glutamine 376. 2 disulfides stabilise this stretch: cysteine 293/cysteine 296 and cysteine 316/cysteine 331.

The protein belongs to the VKOR family. In terms of assembly, interacts with the PSII subunits PSBO1 and PSBO2. Interacts with TL17, TL20.3, HCF164, PETJ, VDE1, EDA3, FKBP13 and FKBP20-2. In terms of tissue distribution, expressed in cotyledons, rosette leaves, stems, cauline leaves and flowers.

The protein resides in the plastid. Its subcellular location is the chloroplast thylakoid membrane. Its function is as follows. Thiol-disulfide oxidoreductase catalyzing disulfide bond formation of chloroplast proteins and involved in redox regulation and photosynthetic electron transport. Required for the assembly of photosystem II (PSII) through the formation of disulfide bond in PSBO, a subunit of the PSII oxygen-evolving complex in the thylakoid lumen. Involved in the formation of disulfide bonds in the lumenal protein FKBP13. In vitro, reduces phylloquinone (vitamin K1) and menaquinone (vitamin K2) to their respective quinol. Cannot reduce phylloquinone epoxide to phylloquinone. Plays an important role in regulating the thylakoid lumen redox. The protein is Thiol-disulfide oxidoreductase LTO1 of Arabidopsis thaliana (Mouse-ear cress).